Reading from the N-terminus, the 1475-residue chain is Protein Shroom4 (1475 aa).

Residues 10–92 form the PDZ domain; the sequence is YVPVQLQGGA…ILKLIVRRRN (83 aa). Disordered regions lie at residues 151-175 and 202-321; these read EKSS…GHLL and CALS…PPRS. A compositionally biased stretch (polar residues) spans 249 to 258; the sequence is TSTSHASSYS. Positions 294–312 are enriched in basic and acidic residues; sequence EQHRASEPVDSLPQKEKPG. Phosphoserine is present on Ser-412. 4 disordered regions span residues 432-523, 542-577, 610-644, and 658-688; these read SKGM…PSAT, HTEA…NRRR, NEAV…SPGD, and SECL…GQSS. Over residues 471-485 the composition is skewed to basic and acidic residues; that stretch reads QTRKERKTTPLDDKL. The segment covering 513 to 523 has biased composition (polar residues); sequence SDLTSQQPSAT. Residues 542 to 557 are compositionally biased toward basic and acidic residues; the sequence is HTEASEEGDNEPKECG. The span at 558-568 shows a compositional bias: gly residues; that stretch reads RLGGRRSGGPR. Composition is skewed to low complexity over residues 624-635 and 658-667; these read PLSASNASLLPS and SECLSQASES. A Phosphoserine modification is found at Ser-722. Composition is skewed to polar residues over residues 727–738 and 775–791; these read AQPQVALSTEAP and KSLS…HNNK. Disordered regions lie at residues 727–753 and 772–791; these read AQPQ…STPQ and ESSK…HNNK. At Ser-1010 the chain carries Phosphoserine. 2 disordered regions span residues 1022–1041 and 1055–1185; these read SNKP…ASMP and SLEP…QSLQ. The span at 1090–1099 shows a compositional bias: pro residues; sequence FPPPRPPPPN. Low complexity predominate over residues 1110–1125; the sequence is QLQQQQQQQQQQQQQQ. Residues 1128–1145 show a composition bias toward acidic residues; that stretch reads EEEEEKEQEEEGEKEEDL. Positions 1149 to 1168 are enriched in polar residues; the sequence is YFSSELTGSCAPNTEEQPQS. The ASD2 domain maps to 1190–1469; sequence FALHPSNFVP…QLKCLKESLH (280 aa). The stretch at 1380–1470 forms a coiled coil; the sequence is SESNQEKLVL…LKCLKESLHL (91 aa).

It belongs to the shroom family. As to quaternary structure, interacts directly with F-actin. As to expression, detected in most adult tissues examined. Expressed in brain, lung, heart, liver, kidney, muscle and ovary. Expressed throughout the brain, with high expression in the brain stem and cerebellum and weaker expression in the hypothalamus, the hippocampus and the olfactory bulb. Expressed in wide range of cell types during development, including vascular endothelium and the polarized epithelium of the neural tube and kidney.

It localises to the cytoplasm. It is found in the cytoskeleton. Probable regulator of cytoskeletal architecture that plays an important role in development. May regulate cellular and cytoskeletal architecture by modulating the spatial distribution of myosin II. The protein is Protein Shroom4 (Shroom4) of Mus musculus (Mouse).